The chain runs to 122 residues: Large ribosomal subunit protein uL14 (122 aa).

The protein belongs to the universal ribosomal protein uL14 family. As to quaternary structure, part of the 50S ribosomal subunit. Forms a cluster with proteins L3 and L19. In the 70S ribosome, L14 and L19 interact and together make contacts with the 16S rRNA in bridges B5 and B8.

Its function is as follows. Binds to 23S rRNA. Forms part of two intersubunit bridges in the 70S ribosome. The polypeptide is Large ribosomal subunit protein uL14 (Caulobacter vibrioides (strain ATCC 19089 / CIP 103742 / CB 15) (Caulobacter crescentus)).